We begin with the raw amino-acid sequence, 185 residues long: Ribose 1,5-bisphosphate phosphokinase PhnN (185 aa).

13–20 contacts ATP; the sequence is GPSGAGKD.

This sequence belongs to the ribose 1,5-bisphosphokinase family.

The catalysed reaction is alpha-D-ribose 1,5-bisphosphate + ATP = 5-phospho-alpha-D-ribose 1-diphosphate + ADP. It functions in the pathway metabolic intermediate biosynthesis; 5-phospho-alpha-D-ribose 1-diphosphate biosynthesis; 5-phospho-alpha-D-ribose 1-diphosphate from D-ribose 5-phosphate (route II): step 3/3. Functionally, catalyzes the phosphorylation of ribose 1,5-bisphosphate to 5-phospho-D-ribosyl alpha-1-diphosphate (PRPP). The polypeptide is Ribose 1,5-bisphosphate phosphokinase PhnN (Chromobacterium violaceum (strain ATCC 12472 / DSM 30191 / JCM 1249 / CCUG 213 / NBRC 12614 / NCIMB 9131 / NCTC 9757 / MK)).